A 100-amino-acid chain; its full sequence is Urease subunit gamma (100 aa).

This sequence belongs to the urease gamma subunit family. In terms of assembly, heterotrimer of UreA (gamma), UreB (beta) and UreC (alpha) subunits. Three heterotrimers associate to form the active enzyme.

It is found in the cytoplasm. The catalysed reaction is urea + 2 H2O + H(+) = hydrogencarbonate + 2 NH4(+). It functions in the pathway nitrogen metabolism; urea degradation; CO(2) and NH(3) from urea (urease route): step 1/1. This chain is Urease subunit gamma, found in Streptomyces avermitilis (strain ATCC 31267 / DSM 46492 / JCM 5070 / NBRC 14893 / NCIMB 12804 / NRRL 8165 / MA-4680).